Reading from the N-terminus, the 218-residue chain is Small ribosomal subunit protein uS3c (218 aa).

Positions 47-118 constitute a KH type-2 domain; the sequence is VQKNMKTSSG…KLNIAITRIE (72 aa).

This sequence belongs to the universal ribosomal protein uS3 family. Part of the 30S ribosomal subunit.

It is found in the plastid. The protein resides in the chloroplast. This is Small ribosomal subunit protein uS3c (rps3) from Lactuca sativa (Garden lettuce).